We begin with the raw amino-acid sequence, 271 residues long: Putative two-component membrane permease complex subunit SMU_746c (271 aa).

Transmembrane regions (helical) follow at residues 34–54 and 70–90; these read LAYI…TIWM and FFSP…PTVP.

The protein belongs to the UPF0703 family. As to quaternary structure, interacts with SMU_747c.

It localises to the cell membrane. Its function is as follows. Could be part of a two-component membrane permease system responsible for amino acid transport under low pH. Involved in acidogenesis, biofilm formation and low-pH survival. The polypeptide is Putative two-component membrane permease complex subunit SMU_746c (Streptococcus mutans serotype c (strain ATCC 700610 / UA159)).